Consider the following 488-residue polypeptide: Monothiol glutaredoxin-S17 (488 aa).

The Thioredoxin domain occupies 2 to 107 (SGTVKDIVSK…LANKVGKVAG (106 aa)). Glutaredoxin domains follow at residues 154-256 (KSRL…GITT), 284-386 (RARL…GITG), and 391-488 (EDRL…TLSE). K408 provides a ligand contact to glutathione. C416 is a binding site for [2Fe-2S] cluster. Glutathione is bound by residues R445, F457, and 470-471 (CD).

Belongs to the glutaredoxin family. CGFS subfamily. As to quaternary structure, [2Fe-2S]-bridged holo-homodimer. Interacts in vitro with SUFE1, BOLA1, BOLA2 and BOLA4. Interacts in vivo only with BOLA2. Interacts with RGLG3 and RGLG4. Post-translationally, ubiquitinated at Lys-154. Polyubiquitinated by RGLG3 and RGLG4. Polyubiquitination of GRXS17 leads to its degradation by the proteasome.

Its subcellular location is the cytoplasm. Functionally, may only reduce GSH-thiol disulfides, but not protein disulfides. Participates probably to the maturation of iron-sulfur proteins and to the regulation of the redox state of the BOLA proteins. The GRXS17-BOLA2 heterodimer binds a labile, oxygen sensitive iron-sulfur cluster. The protein is Monothiol glutaredoxin-S17 of Arabidopsis thaliana (Mouse-ear cress).